A 565-amino-acid chain; its full sequence is Alkaline nuclease (565 aa).

This sequence belongs to the herpesviridae alkaline nuclease family. Interacts with major DNA-binding protein; this interaction increases the nuclease processivity of the alkaline exonuclease.

Its subcellular location is the host nucleus. The protein localises to the host cytoplasm. In terms of biological role, plays a role in processing non linear or branched viral DNA intermediates in order to promote the production of mature packaged unit-length linear progeny viral DNA molecules. Exhibits endonuclease and exonuclease activities and accepts both double-stranded and single-stranded DNA as substrate. Exonuclease digestion of DNA is in the 5'-&gt; 3' direction and the products are 5'-monophosphate nucleosides. Additionally, forms a recombinase with the major DNA-binding protein, which displays strand exchange activity. The sequence is that of Alkaline nuclease from Equus caballus (Horse).